A 308-amino-acid chain; its full sequence is HPr kinase/phosphorylase (308 aa).

Residues H136 and K157 contribute to the active site. ATP is bound at residue 151–158 (GESGIGKS). S158 serves as a coordination point for Mg(2+). The Proton acceptor; for phosphorylation activity. Proton donor; for dephosphorylation activity role is filled by D175. Positions 198–207 (IEVRGMGIID) are important for the catalytic mechanism of both phosphorylation and dephosphorylation. E199 lines the Mg(2+) pocket. Residue R240 is part of the active site. The important for the catalytic mechanism of dephosphorylation stretch occupies residues 261–266 (PIRPGR).

The protein belongs to the HPrK/P family. Homohexamer. It depends on Mg(2+) as a cofactor.

It carries out the reaction [HPr protein]-L-serine + ATP = [HPr protein]-O-phospho-L-serine + ADP + H(+). It catalyses the reaction [HPr protein]-O-phospho-L-serine + phosphate + H(+) = [HPr protein]-L-serine + diphosphate. Its function is as follows. Catalyzes the ATP- as well as the pyrophosphate-dependent phosphorylation of a specific serine residue in HPr, a phosphocarrier protein of the phosphoenolpyruvate-dependent sugar phosphotransferase system (PTS). HprK/P also catalyzes the pyrophosphate-producing, inorganic phosphate-dependent dephosphorylation (phosphorolysis) of seryl-phosphorylated HPr (P-Ser-HPr). The two antagonistic activities of HprK/P are regulated by several intracellular metabolites, which change their concentration in response to the absence or presence of rapidly metabolisable carbon sources (glucose, fructose, etc.) in the growth medium. Therefore, by controlling the phosphorylation state of HPr, HPrK/P is a sensor enzyme that plays a major role in the regulation of carbon metabolism and sugar transport: it mediates carbon catabolite repression (CCR), and regulates PTS-catalyzed carbohydrate uptake and inducer exclusion. This is HPr kinase/phosphorylase from Clostridium kluyveri (strain NBRC 12016).